The primary structure comprises 250 residues: Deoxynucleoside-5'-monophosphate kinase (250 aa).

Residues Gly-14, Asp-16, and Thr-17 each contribute to the ATP site. The dGMP site is built by Val-44, Lys-65, Arg-130, Gly-137, Thr-138, Trp-150, Asp-170, Arg-172, Glu-176, and Ser-210.

Belongs to the dNMP kinase family. In terms of assembly, monomer.

It catalyses the reaction a 2'-deoxyribonucleoside 5'-phosphate + ATP = a 2'-deoxyribonucleoside 5'-diphosphate + ADP. Its function is as follows. Allows the synthesis of deoxyribonucleoside triphosphates necessary for the rapid viral DNA replication. Phosphorylates all four dNMPs. The enzyme had the highest activity with dAMP and had about 30% less activity with dTMP and dGMP, respectively. The lowest activity was observed with dCMP as the substrate (about 35% of that with dAMP). This chain is Deoxynucleoside-5'-monophosphate kinase, found in Escherichia coli (Enterobacteria phage T5).